Here is an 883-residue protein sequence, read N- to C-terminus: Phosphoenolpyruvate carboxylase (883 aa).

Active-site residues include His138 and Lys546.

It belongs to the PEPCase type 1 family. Mg(2+) is required as a cofactor.

The catalysed reaction is oxaloacetate + phosphate = phosphoenolpyruvate + hydrogencarbonate. Forms oxaloacetate, a four-carbon dicarboxylic acid source for the tricarboxylic acid cycle. The protein is Phosphoenolpyruvate carboxylase of Salmonella choleraesuis (strain SC-B67).